A 346-amino-acid chain; its full sequence is Ferredoxin--NADP reductase (346 aa).

7 residues coordinate FAD: E35, Q43, Y48, V88, F122, D287, and T327.

This sequence belongs to the ferredoxin--NADP reductase type 2 family. As to quaternary structure, homodimer. The cofactor is FAD.

The catalysed reaction is 2 reduced [2Fe-2S]-[ferredoxin] + NADP(+) + H(+) = 2 oxidized [2Fe-2S]-[ferredoxin] + NADPH. The protein is Ferredoxin--NADP reductase of Oenococcus oeni (strain ATCC BAA-331 / PSU-1).